We begin with the raw amino-acid sequence, 262 residues long: Triosephosphate isomerase (262 aa).

9–11 (NWK) is a substrate binding site. His-99 serves as the catalytic Electrophile. The Proton acceptor role is filled by Glu-171. The substrate site is built by Gly-177 and Ser-216.

It belongs to the triosephosphate isomerase family. As to quaternary structure, homodimer.

The protein resides in the cytoplasm. It catalyses the reaction D-glyceraldehyde 3-phosphate = dihydroxyacetone phosphate. Its pathway is carbohydrate biosynthesis; gluconeogenesis. It functions in the pathway carbohydrate degradation; glycolysis; D-glyceraldehyde 3-phosphate from glycerone phosphate: step 1/1. Involved in the gluconeogenesis. Catalyzes stereospecifically the conversion of dihydroxyacetone phosphate (DHAP) to D-glyceraldehyde-3-phosphate (G3P). In Blochmanniella floridana, this protein is Triosephosphate isomerase.